We begin with the raw amino-acid sequence, 369 residues long: Probable dual-specificity RNA methyltransferase RlmN (369 aa).

Catalysis depends on E108, which acts as the Proton acceptor. One can recognise a Radical SAM core domain in the interval Y114–E352. A disulfide bridge links C121 with C357. 3 residues coordinate [4Fe-4S] cluster: C128, C132, and C135. S-adenosyl-L-methionine-binding positions include G178 to E179, S212, S235 to H237, and N314. The active-site S-methylcysteine intermediate is C357.

Belongs to the radical SAM superfamily. RlmN family. The cofactor is [4Fe-4S] cluster.

It localises to the cytoplasm. It carries out the reaction adenosine(2503) in 23S rRNA + 2 reduced [2Fe-2S]-[ferredoxin] + 2 S-adenosyl-L-methionine = 2-methyladenosine(2503) in 23S rRNA + 5'-deoxyadenosine + L-methionine + 2 oxidized [2Fe-2S]-[ferredoxin] + S-adenosyl-L-homocysteine. The catalysed reaction is adenosine(37) in tRNA + 2 reduced [2Fe-2S]-[ferredoxin] + 2 S-adenosyl-L-methionine = 2-methyladenosine(37) in tRNA + 5'-deoxyadenosine + L-methionine + 2 oxidized [2Fe-2S]-[ferredoxin] + S-adenosyl-L-homocysteine. Specifically methylates position 2 of adenine 2503 in 23S rRNA and position 2 of adenine 37 in tRNAs. The polypeptide is Probable dual-specificity RNA methyltransferase RlmN (Corynebacterium efficiens (strain DSM 44549 / YS-314 / AJ 12310 / JCM 11189 / NBRC 100395)).